The following is a 29-amino-acid chain: Cyclotide mela-4 (29 aa).

Positions 1–29 (GKPICGETCFKGKCYTPGCTCSYPICKKN) form a cross-link, cyclopeptide (Gly-Asn). 3 disulfide bridges follow: Cys5-Cys19, Cys9-Cys21, and Cys14-Cys26.

This is a cyclic peptide. Post-translationally, contains 3 disulfide bonds.

In terms of biological role, probably participates in a plant defense mechanism (Potential). Binds to and induces leakage in phospholipd membranes, particularly ones containing 1-palmitoyl-2-oleophosphatidylethanolamine (POPE). In vitro, displays cytotoxicity against cultured cells. Not active against Gram-negative bacterium E.coli ATCC 25922 or Gram-positive bacterium S.aureus ATCC 25923 up to a concentration of 64 uM. This is Cyclotide mela-4 from Melicytus latifolius (Norfolk Island mahoe).